The following is a 428-amino-acid chain: Putative aspergillopepsin A-like aspartic endopeptidase AFUA_2G15950 (428 aa).

A signal peptide spans 1–19 (MHSLQSFLFLLLLGYGVFA). A propeptide spans 20–90 (APTSPQAQSQ…GTAANLVTDV (71 aa)) (activation peptide). One can recognise a Peptidase A1 domain in the interval 110–425 (FVSPVTIGGQ…DLRGPSIGLA (316 aa)). Asp-126 is a catalytic residue. N-linked (GlcNAc...) asparagine glycosylation occurs at Asn-276. Residue Asp-312 is part of the active site. The N-linked (GlcNAc...) asparagine glycan is linked to Asn-380.

Belongs to the peptidase A1 family.

The protein localises to the secreted. The polypeptide is Putative aspergillopepsin A-like aspartic endopeptidase AFUA_2G15950 (Aspergillus fumigatus (strain ATCC MYA-4609 / CBS 101355 / FGSC A1100 / Af293) (Neosartorya fumigata)).